Consider the following 69-residue polypeptide: Ubiquitin-ribosomal protein eL40 fusion protein (69 aa).

Positions 1–17 (NIQKESTLHLVLRLRGG) constitute a Ubiquitin-like domain. Lys4 participates in a covalent cross-link: Glycyl lysine isopeptide (Lys-Gly) (interchain with G-Cter in ubiquitin). Gly17 participates in a covalent cross-link: Glycyl lysine isopeptide (Gly-Lys) (interchain with K-? in acceptor proteins). Lys39 carries the post-translational modification N6,N6,N6-trimethyllysine.

It in the N-terminal section; belongs to the ubiquitin family. In the C-terminal section; belongs to the eukaryotic ribosomal protein eL40 family. As to quaternary structure, part of the 60S ribosomal subunit. Trimethylation of Lys-39 ('Lys-22' of the mature chain) by SMYD5 promotes translation elongation and protein synthesis.

The protein localises to the cytoplasm. It is found in the nucleus. Exists either covalently attached to another protein, or free (unanchored). When covalently bound, it is conjugated to target proteins via an isopeptide bond either as a monomer (monoubiquitin), a polymer linked via different Lys residues of the ubiquitin (polyubiquitin chains) or a linear polymer linked via the initiator Met of the ubiquitin (linear polyubiquitin chains). Polyubiquitin chains, when attached to a target protein, have different functions depending on the Lys residue of the ubiquitin that is linked: Lys-6-linked may be involved in DNA repair; Lys-11-linked is involved in ERAD (endoplasmic reticulum-associated degradation) and in cell-cycle regulation; Lys-29-linked is involved in proteotoxic stress response and cell cycle; Lys-33-linked is involved in kinase modification; Lys-48-linked is involved in protein degradation via the proteasome; Lys-63-linked is involved in endocytosis, DNA-damage responses as well as in signaling processes leading to activation of the transcription factor NF-kappa-B. Linear polymer chains formed via attachment by the initiator Met lead to cell signaling. Ubiquitin is usually conjugated to Lys residues of target proteins, however, in rare cases, conjugation to Cys or Ser residues has been observed. When polyubiquitin is free (unanchored-polyubiquitin), it also has distinct roles, such as in activation of protein kinases, and in signaling. Functionally, component of the 60S subunit of the ribosome. The chain is Ubiquitin-ribosomal protein eL40 fusion protein (UBA52) from Gallus gallus (Chicken).